Consider the following 316-residue polypeptide: L-lactate dehydrogenase (316 aa).

Residues valine 15, aspartate 36, arginine 41, tyrosine 66, and 80 to 81 (GA) each bind NAD(+). Residues glutamine 83, arginine 90, and 122–125 (NPVD) contribute to the substrate site. NAD(+)-binding positions include 120-122 (ATN) and threonine 145. Residue 150-153 (DTAR) participates in substrate binding. Residues arginine 155 and histidine 170 each coordinate beta-D-fructose 1,6-bisphosphate. Residue histidine 177 is the Proton acceptor of the active site. Position 222 is a phosphotyrosine (tyrosine 222). Threonine 231 contacts substrate. Residues 287–316 (DPGLSDEEREALRDSARALRDSRADLTVGT) form a disordered region. The segment covering 296–310 (EALRDSARALRDSRA) has biased composition (basic and acidic residues).

Belongs to the LDH/MDH superfamily. LDH family. In terms of assembly, homotetramer.

It is found in the cytoplasm. The enzyme catalyses (S)-lactate + NAD(+) = pyruvate + NADH + H(+). It functions in the pathway fermentation; pyruvate fermentation to lactate; (S)-lactate from pyruvate: step 1/1. Its activity is regulated as follows. Allosterically activated by fructose 1,6-bisphosphate (FBP). In terms of biological role, catalyzes the conversion of lactate to pyruvate. The protein is L-lactate dehydrogenase of Salinibacter ruber (strain DSM 13855 / M31).